A 776-amino-acid polypeptide reads, in one-letter code: Ribosomal biogenesis protein LAS1L (776 aa).

Over residues 185–227 (DEDQLDAEDPEEEEREIIADDVLEEIPEPQDDDKDEELAVEDD) the composition is skewed to acidic residues. The tract at residues 185–247 (DEDQLDAEDP…SHPEPSSRHK (63 aa)) is disordered. Over residues 228 to 247 (ANTKGNEEVASHPEPSSRHK) the composition is skewed to basic and acidic residues. Phosphoserine occurs at positions 425 and 509. The tract at residues 501–646 (KAIEGSSSSS…DYDDDEEEDR (146 aa)) is disordered. The span at 544–557 (GNLKDVKQEEKKEN) shows a compositional bias: basic and acidic residues. Composition is skewed to acidic residues over residues 558 to 602 (EEEE…EEEE) and 611 to 646 (MEAD…EEDR). A Phosphoserine modification is found at Ser658. The tract at residues 677 to 696 (SAWQVSSEDVRWGTFPLGRL) is interaction with NOL9. Residues 733-759 (SSTLSLCCGGSNTNSSSSSSSGNMEGL) form a disordered region. Positions 741–755 (GGSNTNSSSSSSSGN) are enriched in low complexity.

Belongs to the LAS1 family. Component of some MLL1/MLL complex, at least composed of the core components KMT2A/MLL1, ASH2L, HCFC1/HCF1, WDR5 and RBBP5, as well as the facultative components BACC1, CHD8, E2F6, HSP70, INO80C, KANSL1, LAS1L, MAX, MCRS1, MGA, MYST1/MOF, PELP1, PHF20, PRP31, RING2, RUVB1/TIP49A, RUVB2/TIP49B, SENP3, TAF1, TAF4, TAF6, TAF7, TAF9 and TEX10. Component of the 5FMC complex, at least composed of PELP1, LAS1L, TEX10, WDR18 and SENP3; the complex interacts with methylated CHTOP and ZNF148. Interacts with NOL9 to form an ITS2 pre-rRNA endonuclease-kinase complex.

Its subcellular location is the nucleus. It is found in the nucleolus. The protein resides in the nucleoplasm. The protein localises to the cytoplasm. Functionally, required for the synthesis of the 60S ribosomal subunit and maturation of the 28S rRNA. Functions as a component of the Five Friends of Methylated CHTOP (5FMC) complex; the 5FMC complex is recruited to ZNF148 by methylated CHTOP, leading to desumoylation of ZNF148 and subsequent transactivation of ZNF148 target genes. Required for the efficient pre-rRNA processing at both ends of internal transcribed spacer 2 (ITS2). This Mus musculus (Mouse) protein is Ribosomal biogenesis protein LAS1L (Las1l).